A 205-amino-acid polypeptide reads, in one-letter code: MIGRLRGLLVEKQAPEVLIETGGVGYEVQMPLTSFYELPELNQEAVIYTHFVVREDAQLLYGFITKQERALFRLLIKTNGVGPKLALTILSGMTAGEFVKCVEHDDIATLVKLPGVGKKTAERLLVEMRDKLKSLMEASHGNEREFVLQSNYTPAPVVNTAEEDAISALLALGYKPAQASKAVSSVFEEGMDSETLIKASLKSML.

The interval 1-64 (MIGRLRGLLV…EDAQLLYGFI (64 aa)) is domain I. The segment at 65–143 (TKQERALFRL…SLMEASHGNE (79 aa)) is domain II. Residues 144 to 156 (REFVLQSNYTPAP) form a flexible linker region. The tract at residues 157–205 (VVNTAEEDAISALLALGYKPAQASKAVSSVFEEGMDSETLIKASLKSML) is domain III.

Belongs to the RuvA family. Homotetramer. Forms an RuvA(8)-RuvB(12)-Holliday junction (HJ) complex. HJ DNA is sandwiched between 2 RuvA tetramers; dsDNA enters through RuvA and exits via RuvB. An RuvB hexamer assembles on each DNA strand where it exits the tetramer. Each RuvB hexamer is contacted by two RuvA subunits (via domain III) on 2 adjacent RuvB subunits; this complex drives branch migration. In the full resolvosome a probable DNA-RuvA(4)-RuvB(12)-RuvC(2) complex forms which resolves the HJ.

Its subcellular location is the cytoplasm. Its function is as follows. The RuvA-RuvB-RuvC complex processes Holliday junction (HJ) DNA during genetic recombination and DNA repair, while the RuvA-RuvB complex plays an important role in the rescue of blocked DNA replication forks via replication fork reversal (RFR). RuvA specifically binds to HJ cruciform DNA, conferring on it an open structure. The RuvB hexamer acts as an ATP-dependent pump, pulling dsDNA into and through the RuvAB complex. HJ branch migration allows RuvC to scan DNA until it finds its consensus sequence, where it cleaves and resolves the cruciform DNA. The sequence is that of Holliday junction branch migration complex subunit RuvA from Shewanella loihica (strain ATCC BAA-1088 / PV-4).